A 661-amino-acid polypeptide reads, in one-letter code: MDSAPNFIPRLLLLSLLIVSIPLTSSQSDANTTNPSPSPPSDSDLCNGVFVSYTHTKGSKIPPNDTANQPYRFESVITVLNHGRDELKSWRVFVKFAHREILVSASNAVLSDGSSLPVSVENGTVFAGYPSSDLKSAIQTAGDVTQMQARVELVGTQFGVAPPNVPLPKNITLATDGWKCPKATQKGTNVLQVCCIPDPDYDNREIIDNEFLPRKDGDLTIMYDVVRSYSSNYMAQVTMENHNPLGRLDNWKLSFDWMRDEFIYTMKGAYPSIVDSSDCVDGPQAKHYQDLDFSNVLSCARRPTVIDLPPTKYNDSTFGLIPFCCRNGTILPRSMDPSKSSSVFQMQVYKMPPDLNISALSPPQNWRINGTLNPDYKCGPPVRVSPSQFVDPSGLPSNRTAFASWQVVCNITQPKDASPRCCVSFSAYFNDSIVPCKTCACGCSSNKAARACSATAPSLLLPQQALLVPFENRTELTVAWAYLKQRPVPNPMPCGDNCGVSINWHLATDYRGGWTARVTVFNWGETDFVDWFTAVQMKNAAPGFEKAYSFNASTIGINGKNNTIFMEGLPGLNYLVAERDGENPLKNPRIPGKQQSVMSFTKKLTPGINVPGGDGFPSKVFFNGEECSLPTILPMRSSQHRKHISVFLLALPVLALLILRA.

A signal peptide spans 1-26 (MDSAPNFIPRLLLLSLLIVSIPLTSS). The tract at residues 26 to 45 (SQSDANTTNPSPSPPSDSDL) is disordered. Residues Asn-31, Asn-64, Asn-122, Asn-170, Asn-314, Asn-327, Asn-356, Asn-369, Asn-398, Asn-410, Asn-430, Asn-472, Asn-551, and Asn-561 are each glycosylated (N-linked (GlcNAc...) asparagine). Ser-637 is lipidated: GPI-anchor amidated serine. Positions 638–661 (SQHRKHISVFLLALPVLALLILRA) are cleaved as a propeptide — removed in mature form.

Belongs to the COBRA family. In terms of tissue distribution, expressed in roots, stems, leaves, flowers and siliques.

Its subcellular location is the cell membrane. This is COBRA-like protein 7 (COBL7) from Arabidopsis thaliana (Mouse-ear cress).